The primary structure comprises 231 residues: MIP18 family protein YHR122W (231 aa).

Disordered regions lie at residues 1 to 26 (MSEF…DSTK) and 75 to 100 (LTSD…EEEE). N-acetylserine is present on serine 2. Residues 76-90 (TSDEDSLPAESEDES) are compositionally biased toward acidic residues.

This sequence belongs to the MIP18 family.

May play a role in chromosome segregation through establishment of sister chromatid cohesion. The chain is MIP18 family protein YHR122W from Saccharomyces cerevisiae (strain ATCC 204508 / S288c) (Baker's yeast).